A 328-amino-acid chain; its full sequence is Tetraacyldisaccharide 4'-kinase (328 aa).

ATP is bound at residue 58-65 (TMGGAGKT).

It belongs to the LpxK family.

The enzyme catalyses a lipid A disaccharide + ATP = a lipid IVA + ADP + H(+). The protein operates within glycolipid biosynthesis; lipid IV(A) biosynthesis; lipid IV(A) from (3R)-3-hydroxytetradecanoyl-[acyl-carrier-protein] and UDP-N-acetyl-alpha-D-glucosamine: step 6/6. Transfers the gamma-phosphate of ATP to the 4'-position of a tetraacyldisaccharide 1-phosphate intermediate (termed DS-1-P) to form tetraacyldisaccharide 1,4'-bis-phosphate (lipid IVA). This chain is Tetraacyldisaccharide 4'-kinase, found in Phenylobacterium zucineum (strain HLK1).